Consider the following 488-residue polypeptide: Thiamine transporter 2 (488 aa).

Over 1–8 (MDSSCRTP) the chain is Cytoplasmic. Residues 9-29 (PSNSWVYPTVILCLFGFFSMF) traverse the membrane as a helical segment. The Extracellular segment spans residues 30–54 (RPSEAFLIPFLSEPSKNLTSPEMTN). A glycan (N-linked (GlcNAc...) asparagine) is linked at Asn46. The chain crosses the membrane as a helical span at residues 55–75 (EILPVWTYSYLATLPPVFVLT). The Cytoplasmic segment spans residues 76 to 82 (DYLRYKP). A helical transmembrane segment spans residues 83–103 (VIMLHVVAFATSYLFLLFGQG). Over 104–111 (VMLMQTAE) the chain is Extracellular. Residues 112–132 (FFFGVVSATEIAYFAYIYSMV) traverse the membrane as a helical segment. The Cytoplasmic portion of the chain corresponds to 133 to 145 (SPEHYQKVSSYCR). Residues 146–166 (SITLVAYTAGSVLAQLLVSLT) form a helical membrane-spanning segment. The Extracellular portion of the chain corresponds to 167 to 172 (NLPYSS). Residues 173–193 (LFYISLACVSVAFFFSLFLPM) traverse the membrane as a helical segment. Over 194-276 (PKKSMFFHAK…YSSKHLVYWS (83 aa)) the chain is Cytoplasmic. A helical transmembrane segment spans residues 277–297 (LWWAFATAGYNQILNYVQVLW). Topologically, residues 298–310 (EHKAPSQDSSIYN) are extracellular. The helical transmembrane segment at 311-331 (GAVEAIATFGGALASFSVGYL) threads the bilayer. The Cytoplasmic portion of the chain corresponds to 332-335 (KVNW). The chain crosses the membrane as a helical span at residues 336 to 356 (DLLGELGLAVFSAVIAGSLFL). The Extracellular portion of the chain corresponds to 357–369 (MNYSRSIWVCYAG). Asn358 carries N-linked (GlcNAc...) asparagine glycosylation. A helical membrane pass occupies residues 370–390 (YLLVKSSYSFLITIAVFQIAV). Over 391 to 399 (NLSLERYAL) the chain is Cytoplasmic. The chain crosses the membrane as a helical span at residues 400–420 (VFGIDTFIALVIQTIMTMIVV). Residues 421 to 428 (DQRGLQLP) lie on the Extracellular side of the membrane. The chain crosses the membrane as a helical span at residues 429–449 (VTTQFLVYGSYFAVIAGVFLM). The Cytoplasmic portion of the chain corresponds to 450–488 (RSIYILCSAKCRKEVQNLATTRSPNEPHPQEPSNVSTKF). Residues 469–488 (TTRSPNEPHPQEPSNVSTKF) form a disordered region.

It belongs to the reduced folate carrier (RFC) transporter (TC 2.A.48) family. As to expression, high expression in kidney, brain, lung and small intestine. Detected in pancreatic acinar cells (at protein level). Also expressed strongly in pancreatic islet cells.

It localises to the membrane. It catalyses the reaction thiamine(out) + H(+)(in) = thiamine(in) + H(+)(out). Functionally, high-affinity transporter for the intake of thiamine. Unlike the human ortholog, lacks H(+)-dependent pyridoxine transport activity due to an absence of seven critical amino-acids required for pyridoxine transport. The polypeptide is Thiamine transporter 2 (Slc19a3) (Mus musculus (Mouse)).